The primary structure comprises 329 residues: MAKAPMRVAVTGAAGQIGYALLFRIAAGEMLGKDQPVILQLLEIPDEKAQKALKGVMMEIEDCAFPLLAGMEAHADPMTAFKDVDVALLVGARPRGPGMERKDLLSANAQIFTAQGKALNAVASRNVKVLVVGNPANTNAYIAMKSAPDLPRENFTAMLRLDHNRALSQIAAKTGKPVSSIEKLFVWGNHSPTMYADYRYATIDGQSVKDMINDPVWNNDVFLPTVGKRGAAIIEARGLSSAASAANAAIDHVRDWVLGSNGKIVTMGIPSNGDYEIPQDVMFGFPVTTANGKYEVVKGFEVDAYSREKINITLKELEEERAGVQHLLG.

12 to 18 (GAAGQIG) is an NAD(+) binding site. Substrate contacts are provided by arginine 95 and arginine 101. NAD(+) contacts are provided by residues asparagine 108, glutamine 115, and 132-134 (VGN). Residues asparagine 134 and arginine 165 each contribute to the substrate site. Histidine 190 acts as the Proton acceptor in catalysis.

It belongs to the LDH/MDH superfamily. MDH type 2 family.

It catalyses the reaction (S)-malate + NAD(+) = oxaloacetate + NADH + H(+). In terms of biological role, catalyzes the reversible oxidation of malate to oxaloacetate. The polypeptide is Malate dehydrogenase (Ralstonia nicotianae (strain ATCC BAA-1114 / GMI1000) (Ralstonia solanacearum)).